A 2193-amino-acid polypeptide reads, in one-letter code: Genome polyprotein (2193 aa).

G2 carries the N-myristoyl glycine; by host lipid modification. The Cytoplasmic portion of the chain corresponds to G2 to Q1503. Residues E567–V583 form an amphipathic alpha-helix region. Catalysis depends on for protease 2A activity residues H880 and D898. Residues C915 and C917 each contribute to the Zn(2+) site. The active-site For protease 2A activity is the C969. Residues C975 and H977 each coordinate Zn(2+). The tract at residues N1109–Q1181 is membrane-binding. Positions N1109–T1247 are oligomerization. The RNA-binding stretch occupies residues A1130–Q1134. Residues E1213–N1369 form the SF3 helicase domain. C1377, C1389, and C1394 together coordinate Zn(2+). The C4-type; degenerate zinc finger occupies C1377–C1394. Positions E1421–V1428 are RNA-binding. Residues L1432–Q1437 are oligomerization. Residues A1504–Y1519 lie within the membrane without spanning it. Residues K1520–F2193 are Cytoplasmic-facing. Y1529 is modified (O-(5'-phospho-RNA)-tyrosine). Positions G1549–F1727 constitute a Peptidase C3 domain. Active-site for protease 3C activity residues include H1588, E1619, and C1695. Positions G1958–L2074 constitute a RdRp catalytic domain. Mg(2+) is bound by residues D1964 and D2060.

Belongs to the picornaviruses polyprotein family. As to quaternary structure, interacts with capsid protein VP1 and capsid protein VP3 to form heterotrimeric protomers. Interacts with capsid protein VP0, and capsid protein VP3 to form heterotrimeric protomers. Five protomers subsequently associate to form pentamers which serve as building blocks for the capsid. Interacts with capsid protein VP2, capsid protein VP3 and capsid protein VP4 following cleavage of capsid protein VP0. In terms of assembly, interacts with capsid protein VP1 and capsid protein VP3 in the mature capsid. As to quaternary structure, interacts with capsid protein VP0 and capsid protein VP1 to form heterotrimeric protomers. Five protomers subsequently associate to form pentamers which serve as building blocks for the capsid. Interacts with capsid protein VP4 in the mature capsid. Interacts with protein 2C; this interaction may be important for virion morphogenesis. Interacts with capsid protein VP1 and capsid protein VP3. In terms of assembly, homodimer. As to quaternary structure, homohexamer; forms a hexameric ring structure with 6-fold symmetry characteristic of AAA+ ATPases. Interacts (via N-terminus) with host RTN3 (via reticulon domain); this interaction is important for viral replication. Interacts with capsid protein VP3; this interaction may be important for virion morphogenesis. Interacts with protein 3CD. In terms of assembly, homodimer. Interacts with host GBF1. Interacts (via GOLD domain) with host ACBD3 (via GOLD domain); this interaction allows the formation of a viral protein 3A/ACBD3 heterotetramer with a 2:2 stoichiometry, which will stimulate the recruitment of host PI4KB in order to synthesize PI4P at the viral RNA replication sites. As to quaternary structure, interacts with RNA-directed RNA polymerase. Interacts with protein 3AB and with RNA-directed RNA polymerase. In terms of assembly, interacts with Viral protein genome-linked and with protein 3CD. Mg(2+) serves as cofactor. Specific enzymatic cleavages in vivo by the viral proteases yield processing intermediates and the mature proteins. In terms of processing, myristoylation is required for the formation of pentamers during virus assembly. Further assembly of 12 pentamers and a molecule of genomic RNA generates the provirion. Post-translationally, during virion maturation, immature virions are rendered infectious following cleavage of VP0 into VP4 and VP2. This maturation seems to be an autocatalytic event triggered by the presence of RNA in the capsid and it is followed by a conformational change infectious virion. Myristoylation is required during RNA encapsidation and formation of the mature virus particle. In terms of processing, VPg is uridylylated by the polymerase into VPg-pUpU. This acts as a nucleotide-peptide primer for the genomic RNA replication.

It is found in the virion. The protein resides in the host cytoplasm. The protein localises to the host cytoplasmic vesicle membrane. Its subcellular location is the host nucleus. It carries out the reaction a ribonucleoside 5'-triphosphate + H2O = a ribonucleoside 5'-diphosphate + phosphate + H(+). The enzyme catalyses Selective cleavage of Tyr-|-Gly bond in the picornavirus polyprotein.. It catalyses the reaction RNA(n) + a ribonucleoside 5'-triphosphate = RNA(n+1) + diphosphate. The catalysed reaction is Selective cleavage of Gln-|-Gly bond in the poliovirus polyprotein. In other picornavirus reactions Glu may be substituted for Gln, and Ser or Thr for Gly.. With respect to regulation, replication or transcription is subject to high level of random mutations by the nucleotide analog ribavirin. In terms of biological role, forms an icosahedral capsid of pseudo T=3 symmetry with capsid proteins VP2 and VP3. The capsid is 300 Angstroms in diameter, composed of 60 copies of each capsid protein and enclosing the viral positive strand RNA genome. Capsid protein VP1 mainly forms the vertices of the capsid. Capsid protein VP1 interacts with host cell receptor to provide virion attachment to target host cells. This attachment induces virion internalization. Tyrosine kinases are probably involved in the entry process. After binding to its receptor, the capsid undergoes conformational changes. Capsid protein VP1 N-terminus (that contains an amphipathic alpha-helix) and capsid protein VP4 are externalized. Together, they shape a pore in the host membrane through which viral genome is translocated to host cell cytoplasm. Functionally, forms an icosahedral capsid of pseudo T=3 symmetry with capsid proteins VP2 and VP3. The capsid is 300 Angstroms in diameter, composed of 60 copies of each capsid protein and enclosing the viral positive strand RNA genome. Its function is as follows. Lies on the inner surface of the capsid shell. After binding to the host receptor, the capsid undergoes conformational changes. Capsid protein VP4 is released, Capsid protein VP1 N-terminus is externalized, and together, they shape a pore in the host membrane through which the viral genome is translocated into the host cell cytoplasm. Component of immature procapsids, which is cleaved into capsid proteins VP4 and VP2 after maturation. Allows the capsid to remain inactive before the maturation step. In terms of biological role, cysteine protease that cleaves viral polyprotein and specific host proteins. It is responsible for the autocatalytic cleavage between the P1 and P2 regions, which is the first cleavage occurring in the polyprotein. Also cleaves the host translation initiation factor EIF4G1, in order to shut down the capped cellular mRNA translation. Inhibits the host nucleus-cytoplasm protein and RNA trafficking by cleaving host members of the nuclear pores. Counteracts stress granule formation probably by antagonizing its assembly or promoting its dissassembly. Functionally, plays an essential role in the virus replication cycle by acting as a viroporin. Creates a pore in the host endoplasmic reticulum and as a consequence releases Ca2+ in the cytoplasm of infected cell. In turn, high levels of cytoplasmic calcium may trigger membrane trafficking and transport of viral ER-associated proteins to viroplasms, sites of viral genome replication. Its function is as follows. Induces and associates with structural rearrangements of intracellular membranes. Displays RNA-binding, nucleotide binding and NTPase activities. May play a role in virion morphogenesis and viral RNA encapsidation by interacting with the capsid protein VP3. Localizes the viral replication complex to the surface of membranous vesicles. Together with protein 3CD binds the Cis-Active RNA Element (CRE) which is involved in RNA synthesis initiation. Acts as a cofactor to stimulate the activity of 3D polymerase, maybe through a nucleid acid chaperone activity. In terms of biological role, localizes the viral replication complex to the surface of membranous vesicles. It inhibits host cell endoplasmic reticulum-to-Golgi apparatus transport and causes the disassembly of the Golgi complex, possibly through GBF1 interaction. This would result in depletion of MHC, trail receptors and IFN receptors at the host cell surface. Plays an essential role in viral RNA replication by recruiting ACBD3 and PI4KB at the viral replication sites, thereby allowing the formation of the rearranged membranous structures where viral replication takes place. Functionally, acts as a primer for viral RNA replication and remains covalently bound to viral genomic RNA. VPg is uridylylated prior to priming replication into VPg-pUpU. The oriI viral genomic sequence may act as a template for this. The VPg-pUpU is then used as primer on the genomic RNA poly(A) by the RNA-dependent RNA polymerase to replicate the viral genome. During genome replication, the VPg-RNA linkage is removed by the host TDP2, thereby accelerating replication. During the late stage of the replication cycle, host TDP2 is excluded from sites of viral RNA synthesis and encapsidation, allowing for the generation of progeny virions. Its function is as follows. Involved in the viral replication complex and viral polypeptide maturation. It exhibits protease activity with a specificity and catalytic efficiency that is different from protease 3C. Protein 3CD lacks polymerase activity. Protein 3CD binds to the 5'UTR of the viral genome. Replicates the viral genomic RNA on the surface of intracellular membranes. May form linear arrays of subunits that propagate along a strong head-to-tail interaction called interface-I. Covalently attaches UMP to a tyrosine of VPg, which is used to prime RNA synthesis. The positive stranded RNA genome is first replicated at virus induced membranous vesicles, creating a dsRNA genomic replication form. This dsRNA is then used as template to synthesize positive stranded RNA genomes. ss(+)RNA genomes are either translated, replicated or encapsidated. In terms of biological role, major viral protease that mediates proteolytic processing of the polyprotein. Cleaves host EIF5B, contributing to host translation shutoff. Also cleaves host PABPC1, contributing to host translation shutoff. Cleaves host NLRP1, triggers host N-glycine-mediated degradation of the autoinhibitory NLRP1 N-terminal fragment. The polypeptide is Genome polyprotein (Echovirus 9 (strain Hill)).